We begin with the raw amino-acid sequence, 474 residues long: E3 ubiquitin-protein ligase CBL-C (474 aa).

Residues Pro-7–Cys-145 are 4H. The region spanning Pro-7 to Glu-321 is the Cbl-PTB domain. The interval Gly-146–Phe-218 is EF-hand-like. 3 residues coordinate Ca(2+): Asp-199, Thr-201, and Glu-210. The tract at residues Gln-219 to Glu-321 is SH2-like. Position 264 (Arg-264) interacts with 4-O-phospho-L-tyrosine. The segment at Leu-322–Leu-350 is linker. Tyr-341 carries the post-translational modification Phosphotyrosine; by SRC. The RING-type zinc finger occupies Cys-351–Arg-390. Residues Cys-351–Ala-474 are interaction with RET. Residues Thr-409–Ala-474 form a disordered region. Pro residues predominate over residues Ser-432–Asp-441.

In terms of assembly, interacts with ubiquitin-conjugating enzyme E2 UBE2D2 and UBE2D3. Isoform 1 interacts with EGFR (tyrosine phosphorylated). Interacts with the SH3 domain proteins LYN and CRK. Interacts (via RING-type zinc finger) with TGFB1I1 (via LIM zinc-binding domain 2); the interaction is direct and enhances the E3 activity. Interacts directly with RET (inactive) and CD2AP; dissociates from RET upon RET activation by GDNF which also increases the interaction with CD2AP suggesting dissociation as CBLC:CD2AP complex. Interacts with SRC; the interaction is enhanced when SRC is phosphorylated at 'Tyr-419'. Post-translationally, phosphorylated on multiple tyrosine residues by SRC. Isoform 1, but not isoform 2, is phosphorylated on tyrosines by EGFR. Autoubiquitinated when phosphorylated at Tyr-341, enhanced by SRC; suggesting proteasomal degradation. As to expression, ubiquitous.

The catalysed reaction is S-ubiquitinyl-[E2 ubiquitin-conjugating enzyme]-L-cysteine + [acceptor protein]-L-lysine = [E2 ubiquitin-conjugating enzyme]-L-cysteine + N(6)-ubiquitinyl-[acceptor protein]-L-lysine.. Its activity is regulated as follows. Phosphorylation at Tyr-341 is necessary and sufficient for the activation of E3 activity. Functionally, acts as an E3 ubiquitin-protein ligase, which accepts ubiquitin from specific E2 ubiquitin-conjugating enzymes, and then transfers it to substrates promoting their degradation by the proteasome. Functionally coupled with the E2 ubiquitin-protein ligases UB2D1, UB2D2 and UB2D3. Regulator of EGFR mediated signal transduction; upon EGF activation, ubiquitinates EGFR. Isoform 1, but not isoform 2, inhibits EGF stimulated MAPK1 activation. Promotes ubiquitination of SRC phosphorylated at 'Tyr-419'. In collaboration with CD2AP may act as regulatory checkpoint for Ret signaling by modulating the rate of RET degradation after ligand activation; CD2AP converts it from an inhibitor to a promoter of RET degradation; the function limits the potency of GDNF on neuronal survival. The chain is E3 ubiquitin-protein ligase CBL-C (CBLC) from Homo sapiens (Human).